The following is a 270-amino-acid chain: MKLSLSPPPYADAPVVVLISGLGGSGSYWLPQLAVLEQEYQVVCYDQRGTGNNPDTLAEDYSIAQMAAELHQALVAAGIERYAVVGHALGALVGMQLALDYPASVTVLVSVNGWLRINAHTRRCFQVREQLLHSGGAQAWVEAQPLFLYPADWMAARAPRLEAEDALALAHFQGKNNLLRRLNALKRADFSRHADRIRCPVQIICASDDLLVPTACSSELHAALPDSQKMVMRYGGHACNVTDPETFNALLLNGLASLLHHREAACKELL.

Belongs to the AB hydrolase superfamily. Hydrolase RutD family.

It catalyses the reaction carbamate + 2 H(+) = NH4(+) + CO2. Its function is as follows. Involved in pyrimidine catabolism. May facilitate the hydrolysis of carbamate, a reaction that can also occur spontaneously. This is Putative carbamate hydrolase RutD from Escherichia coli (strain SMS-3-5 / SECEC).